The sequence spans 382 residues: Innexin-8 (382 aa).

Transmembrane regions (helical) follow at residues Leu-29–Gly-49, Gln-103–Trp-123, Val-187–Leu-207, and Ile-270–Phe-290.

Belongs to the pannexin family.

It is found in the cell membrane. The protein localises to the cell junction. The protein resides in the gap junction. Functionally, structural component of the gap junctions. The sequence is that of Innexin-8 (inx-8) from Caenorhabditis elegans.